Here is a 513-residue protein sequence, read N- to C-terminus: Cytochrome P450 monooxygenase orf3 (513 aa).

The helical transmembrane segment at 11–31 (LVALGLIAATIIIYSFTLTVY) threads the bilayer. Residues N211 and N351 are each glycosylated (N-linked (GlcNAc...) asparagine). C455 provides a ligand contact to heme.

Belongs to the cytochrome P450 family. It depends on heme as a cofactor.

The protein localises to the membrane. It participates in mycotoxin biosynthesis. Functionally, cytochrome P450 monooxygenase; part of the gene cluster that mediates the biosynthesis of brefeldin A (BFA), a protein transport inhibitor that shows antiviral, antifungal, and antitumor properties. The proposed biosynthesis of BFA involves formation of an acyclic polyketide chain that is differentially tailored throughout the backbone. The highly reducing polyketide synthase Bref-PKS is proposed to synthesize the precisely reduced octaketide precursor, which could then be directly offloaded by the thiohydrolase enzyme Bref-TH followed by a cytochrome P450 monooxygenase-mediated formation of the cyclopentane ring and macrocyclization to afford 7-deoxy BFA. Alternatively, the first ring annulation can also occur on the ACP-tethered intermediate before the thiohydrolase release and lactonization. The C7-hydroxylation by another cytochrome P450 monooxygenase is believed to be the final step in the process to obtain the final structure of BFA. In addition to the HRPKS Bref-PKS and the thiohydrolase Bref-TH, the brefeldin A biosynthesis cluster contains 4 cytochrome p450 monooxygenases (called orf3 to orf6), as well a the probable cluster-specific transcription regulator orf8. The chain is Cytochrome P450 monooxygenase orf3 from Eupenicillium brefeldianum (Penicillium brefeldianum).